Here is a 426-residue protein sequence, read N- to C-terminus: Histone deacetylase 9 (426 aa).

A histone deacetylase region spans residues 6–318; it reads KISYFYDGDV…WTVETGILLD (313 aa). His-137 acts as the Proton donor/acceptor in catalysis. 3 residues coordinate Zn(2+): Asp-172, His-174, and Asp-261. The segment at 383–426 is disordered; sequence PDFYIPDFDEDEQNPDVRADQRSRDKQIQRDDEYFDGDNDNDAS. Residues 397 to 414 are compositionally biased toward basic and acidic residues; sequence PDVRADQRSRDKQIQRDD. The span at 415-426 shows a compositional bias: acidic residues; it reads EYFDGDNDNDAS.

The protein belongs to the histone deacetylase family. HD type 1 subfamily. In terms of assembly, interacts with AHL22. Binds to farnesylated ASG2 in the cytosol. Zn(2+) serves as cofactor.

It localises to the nucleus. Its subcellular location is the cytoplasm. The protein localises to the cytosol. The catalysed reaction is N(6)-acetyl-L-lysyl-[histone] + H2O = L-lysyl-[histone] + acetate. In terms of biological role, responsible for the deacetylation of lysine residues on the N-terminal part of the core histones (H2A, H2B, H3 and H4). Histone deacetylation gives a tag for epigenetic repression and plays an important role in transcriptional regulation, cell cycle progression and developmental events. Histone deacetylases act via the formation of large multiprotein complexes. The chain is Histone deacetylase 9 (HDA9) from Arabidopsis thaliana (Mouse-ear cress).